A 131-amino-acid chain; its full sequence is MSMHDPISDMLTRIRNGQHASKVKVSMPSSKLKIALAQVLKEEGYIEDFAIAGEEKKPVLDIQLKYYAGRPVIERIERVSRPGLRVYKGSTEIPKVMNGLGVAILSTSKGVMTDRKARAAGIGGELLCVVA.

Belongs to the universal ribosomal protein uS8 family. In terms of assembly, part of the 30S ribosomal subunit. Contacts proteins S5 and S12.

Its function is as follows. One of the primary rRNA binding proteins, it binds directly to 16S rRNA central domain where it helps coordinate assembly of the platform of the 30S subunit. The chain is Small ribosomal subunit protein uS8 from Chromobacterium violaceum (strain ATCC 12472 / DSM 30191 / JCM 1249 / CCUG 213 / NBRC 12614 / NCIMB 9131 / NCTC 9757 / MK).